A 148-amino-acid polypeptide reads, in one-letter code: CDC25-like phosphatase YCH1 (148 aa).

M1 bears the N-acetylmethionine mark. Positions 29-137 constitute a Rhodanese domain; the sequence is LREPFQVVDV…WQSVYGDDES (109 aa).

This sequence belongs to the MPI phosphatase family.

The protein resides in the cytoplasm. It is found in the nucleus. Protein phosphatase. The protein is CDC25-like phosphatase YCH1 (YCH1) of Saccharomyces cerevisiae (strain ATCC 204508 / S288c) (Baker's yeast).